Consider the following 321-residue polypeptide: Polyamine aminopropyltransferase (321 aa).

A PABS domain is found at 23–256 (HLLYLEHAGP…DEWSFSFGSD (234 aa)). An S-methyl-5'-thioadenosine-binding site is contributed by Q53. Residues H84 and D108 each coordinate spermidine. S-methyl-5'-thioadenosine-binding positions include E127 and 159-160 (DG). D177 (proton acceptor) is an active-site residue.

It belongs to the spermidine/spermine synthase family. As to quaternary structure, homodimer or homotetramer.

The protein localises to the cytoplasm. The catalysed reaction is S-adenosyl 3-(methylsulfanyl)propylamine + putrescine = S-methyl-5'-thioadenosine + spermidine + H(+). It functions in the pathway amine and polyamine biosynthesis; spermidine biosynthesis; spermidine from putrescine: step 1/1. Catalyzes the irreversible transfer of a propylamine group from the amino donor S-adenosylmethioninamine (decarboxy-AdoMet) to putrescine (1,4-diaminobutane) to yield spermidine. The chain is Polyamine aminopropyltransferase from Korarchaeum cryptofilum (strain OPF8).